Reading from the N-terminus, the 216-residue chain is Uracil phosphoribosyltransferase (216 aa).

5-phospho-alpha-D-ribose 1-diphosphate is bound by residues arginine 85, arginine 110, and 135–143; that span reads DPMVATGYS. Residues isoleucine 200 and 205–207 contribute to the uracil site; that span reads GDA. Aspartate 206 serves as a coordination point for 5-phospho-alpha-D-ribose 1-diphosphate.

The protein belongs to the UPRTase family. Mg(2+) is required as a cofactor.

The catalysed reaction is UMP + diphosphate = 5-phospho-alpha-D-ribose 1-diphosphate + uracil. Its pathway is pyrimidine metabolism; UMP biosynthesis via salvage pathway; UMP from uracil: step 1/1. Its activity is regulated as follows. Allosterically activated by GTP. In terms of biological role, catalyzes the conversion of uracil and 5-phospho-alpha-D-ribose 1-diphosphate (PRPP) to UMP and diphosphate. This is Uracil phosphoribosyltransferase from Burkholderia lata (strain ATCC 17760 / DSM 23089 / LMG 22485 / NCIMB 9086 / R18194 / 383).